The primary structure comprises 184 residues: Photosystem I assembly protein Ycf4 (184 aa).

2 helical membrane passes run 25–45 and 57–77; these read ACIL…SYLG and ILFV…LFIS.

The protein belongs to the Ycf4 family.

The protein resides in the plastid. The protein localises to the chloroplast thylakoid membrane. Functionally, seems to be required for the assembly of the photosystem I complex. This Cycas taitungensis (Prince sago) protein is Photosystem I assembly protein Ycf4.